We begin with the raw amino-acid sequence, 466 residues long: tRNA(Ile)-lysidine synthase (466 aa).

Position 26–31 (26–31 (SGGSDS)) interacts with ATP.

This sequence belongs to the tRNA(Ile)-lysidine synthase family.

Its subcellular location is the cytoplasm. The catalysed reaction is cytidine(34) in tRNA(Ile2) + L-lysine + ATP = lysidine(34) in tRNA(Ile2) + AMP + diphosphate + H(+). Its function is as follows. Ligates lysine onto the cytidine present at position 34 of the AUA codon-specific tRNA(Ile) that contains the anticodon CAU, in an ATP-dependent manner. Cytidine is converted to lysidine, thus changing the amino acid specificity of the tRNA from methionine to isoleucine. The protein is tRNA(Ile)-lysidine synthase of Oceanobacillus iheyensis (strain DSM 14371 / CIP 107618 / JCM 11309 / KCTC 3954 / HTE831).